The following is an 885-amino-acid chain: Chromatin assembly factor 1 subunit A-B (885 aa).

Disordered regions lie at residues 1–24 (MPGKEAAGDVMKSSTKSNTKKMVQ), 115–157 (EDSN…NEEC), 176–361 (LDKP…EEEK), and 536–605 (VDSD…QKLK). Positions 12–21 (KSSTKSNTKK) are enriched in low complexity. Composition is skewed to polar residues over residues 116–128 (DSNISTSNDSPLN), 134–157 (QLANGTVSPERSTTNAPLSTNEEC), and 182–193 (SAASCTSVSNFS). Composition is skewed to low complexity over residues 211-227 (VSVSSSSSPVSLSSPDV) and 237-254 (SSPSTSTTPTGKATSNKT). The stretch at 251 to 376 (SNKTSAEKKK…KAEITRFLQK (126 aa)) forms a coiled coil. Over residues 255–361 (SAEKKKTKDK…EEKRLKEEEK (107 aa)) the composition is skewed to basic and acidic residues. 2 stretches are compositionally biased toward acidic residues: residues 536-548 (VDSDEEWEEEEPG) and 557-573 (ENEDDDPKEEEDEDDDG). The segment at 629–665 (CVWCDSKASEIRLLQKFSACILESPAVEEELTQDISS) is necessary for homodimerization, competence for chromatin assembly.

The protein belongs to the CHAF1A family. Homodimer.

It is found in the nucleus. In terms of biological role, involved in chromatin assembly in DNA replication and DNA repair. The chain is Chromatin assembly factor 1 subunit A-B (chaf1a-b) from Xenopus laevis (African clawed frog).